We begin with the raw amino-acid sequence, 431 residues long: MQIYVVKQGDTLSAIASQYRTTTNDITETNEIPNPDSLVVGQTIVIPIAGQFYDVKRGDTLTSIARQFNTTAAELARVNRIQLNTVLQIGFRLYIPPAPKRDIESNAYLEPRGNQVSENLQQAAREASPYLTYLGAFSFQAQRNGTLVAPPLTNLRSITESQNTTLMMIITNLENQAFSDELGRILLNDETVKRRLLNEIVENARRYGFRDIHFDFEYLRPQDREAYNQFLREARDLFHREGLEISTALAPKTSATQQGRWYEAHDYRAHGEIVDFVVLMTYEWGYSGGPPQAVSPIGPVRDVIEYALTEMPANKIVMGQNLYGYDWTLPYTAGGTPARAVSPQQAIVIADQNNASIQYDQTAQAPFFRYTDAENRRHEVWFEDARSIQAKFNLIKELNLRGISYWKLGLSFPQNWLLLSDQFNVVKKTFR.

LysM domains lie at 2–46 (QIYV…TIVI) and 51–95 (QFYD…RLYI). In terms of domain architecture, GH18 spans 103–431 (IESNAYLEPR…QFNVVKKTFR (329 aa)). Residues 148-149 (VA) and 174-177 (ENQA) contribute to the chitin site. Glutamate 217 acts as the Proton donor in catalysis. Residues tyrosine 218, 280-283 (MTYE), and tryptophan 406 each bind chitin.

This sequence belongs to the glycosyl hydrolase 18 family. Chitinase class II subfamily.

It localises to the spore coat. In terms of biological role, N-acetylglucosaminidase involved in cortex peptidoglycan degradation during germination. Cleaves only partially degraded spore peptidoglycans. Recognizes muramic acid delta-lactam residues specific to spore peptidoglycans. This Bacillus subtilis (strain 168) protein is Cortical fragment-lytic enzyme.